We begin with the raw amino-acid sequence, 621 residues long: Chaperone protein DnaK (621 aa).

At threonine 202 the chain carries Phosphothreonine; by autocatalysis. The segment at 596–621 (SQFAQAAKQNEEKKEEDKKDSEESKN) is disordered. Positions 604-621 (QNEEKKEEDKKDSEESKN) are enriched in basic and acidic residues.

Belongs to the heat shock protein 70 family.

Functionally, acts as a chaperone. The polypeptide is Chaperone protein DnaK (Malacoplasma penetrans (strain HF-2) (Mycoplasma penetrans)).